The primary structure comprises 277 residues: Diaminopimelate epimerase (277 aa).

Positions 15, 48, and 66 each coordinate substrate. The Proton donor role is filled by C75. Substrate is bound by residues 76–77, N156, N189, and 207–208; these read GN and ER. Residue C216 is the Proton acceptor of the active site. Position 217 to 218 (217 to 218) interacts with substrate; that stretch reads GS.

Belongs to the diaminopimelate epimerase family. Homodimer.

It localises to the cytoplasm. The enzyme catalyses (2S,6S)-2,6-diaminopimelate = meso-2,6-diaminopimelate. It functions in the pathway amino-acid biosynthesis; L-lysine biosynthesis via DAP pathway; DL-2,6-diaminopimelate from LL-2,6-diaminopimelate: step 1/1. Catalyzes the stereoinversion of LL-2,6-diaminopimelate (L,L-DAP) to meso-diaminopimelate (meso-DAP), a precursor of L-lysine and an essential component of the bacterial peptidoglycan. The polypeptide is Diaminopimelate epimerase (Acidiphilium cryptum (strain JF-5)).